The primary structure comprises 542 residues: Probable E3 ubiquitin-protein ligase ARI11 (542 aa).

Positions 1–25 (MSSSDRDIIDIESGEEDLYSDGGND) are disordered. The segment covering 10–19 (DIESGEEDLY) has biased composition (acidic residues). The segment at 135–342 (VDIQCGICFE…SDHKACNAFK (208 aa)) is TRIAD supradomain. Cys-139, Cys-142, Cys-156, His-158, Cys-161, Cys-164, Cys-184, Cys-189, Cys-228, Cys-233, Cys-251, Cys-253, Cys-258, Cys-261, His-266, Cys-271, Cys-298, and Cys-301 together coordinate Zn(2+). Residues 139-189 (CGICFESYTRKEIARVSCGHPYCKTCWTGYITTKIEDGPGCLRVKCPEPSC) form an RING-type 1 zinc finger. The IBR-type zinc-finger motif lies at 208-271 (DKYYRYFLRS…CEDAHSPVDC (64 aa)). Residues 298–328 (CPKCKRPIEKNTGCNHMSCSAPCRHYFCWAC) form an RING-type 2; atypical zinc finger. The active site involves Cys-311. Positions 316, 320, 325, 328, 335, and 338 each coordinate Zn(2+).

This sequence belongs to the RBR family. Ariadne subfamily. Requires Zn(2+) as cofactor.

The catalysed reaction is [E2 ubiquitin-conjugating enzyme]-S-ubiquitinyl-L-cysteine + [acceptor protein]-L-lysine = [E2 ubiquitin-conjugating enzyme]-L-cysteine + [acceptor protein]-N(6)-ubiquitinyl-L-lysine.. It functions in the pathway protein modification; protein ubiquitination. Its function is as follows. Might act as an E3 ubiquitin-protein ligase, or as part of E3 complex, which accepts ubiquitin from specific E2 ubiquitin-conjugating enzymes and then transfers it to substrates. The sequence is that of Probable E3 ubiquitin-protein ligase ARI11 (ARI11) from Arabidopsis thaliana (Mouse-ear cress).